The primary structure comprises 535 residues: Signal transduction histidine-protein kinase AfsQ2 (535 aa).

Residues 1-30 (MTREHQGGTRGLAAARKGFWSGLRFTSLRL) are Cytoplasmic-facing. Residues 31–52 (RLVLVFGLVALTAAVSASGIAY) form a helical membrane-spanning segment. Over 53-198 (WLNREAVLTR…SLEPEAKDLN (146 aa)) the chain is Extracellular. Residues 199–219 (SLAWSLGIATALALLGSALLA) traverse the membrane as a helical segment. At 220-535 (QALATTVLKP…DRGKDAKGQV (316 aa)) the chain is on the cytoplasmic side. One can recognise an HAMP domain in the interval 224 to 276 (TTVLKPVHRLGVAARRLGEGKLDTRLRVSGTDELADLSRTFNSAAENLEKRVA). A Histidine kinase domain is found at 291–510 (DMSHELRTPL…VFTLRLPQDP (220 aa)). The residue at position 294 (H294) is a Phosphohistidine. The interval 493 to 535 (ENAPEGGAVFTLRLPQDPSPPADEDGGPDEETEDRGKDAKGQV) is disordered. Positions 514-525 (ADEDGGPDEETE) are enriched in acidic residues. Basic and acidic residues predominate over residues 526-535 (DRGKDAKGQV).

The protein resides in the cell membrane. It carries out the reaction ATP + protein L-histidine = ADP + protein N-phospho-L-histidine.. Functionally, forms part of a two-component regulatory system AfsQ1/AfsQ2 involved in secondary metabolism. May activate AfsQ1 by phosphorylation. The sequence is that of Signal transduction histidine-protein kinase AfsQ2 (afsQ2) from Streptomyces coelicolor (strain ATCC BAA-471 / A3(2) / M145).